Reading from the N-terminus, the 258-residue chain is Short-chain dehydrogenase/reductase aba4 (258 aa).

Positions 20, 66, and 130 each coordinate NADP(+). Catalysis depends on proton donor residues Ser-146 and Tyr-160. NADP(+) is bound by residues Tyr-160, Lys-164, Ile-193, and Thr-195. Residue Lys-164 is the Lowers pKa of active site Tyr of the active site.

The protein belongs to the short-chain dehydrogenases/reductases (SDR) family.

It participates in hormone biosynthesis. Short-chain dehydrogenase/reductase; part of the gene cluster that mediates the biosynthesis of abscisic acid (ABA), a phytohormone that acts antagonistically toward salicylic acid (SA), jasmonic acid (JA) and ethylene (ETH) signaling, to impede plant defense responses. The first step of the pathway catalyzes the reaction from farnesyl diphosphate to alpha-ionylideneethane performed by the alpha-ionylideneethane synthase aba3 via a three-step reaction mechanism involving 2 neutral intermediates, beta-farnesene and allofarnesene. The cytochrome P450 monooxygenase aba1 might then be involved in the conversion of alpha-ionylideneethane to alpha-ionylideneacetic acid. Alpha-ionylideneacetic acid is further converted to abscisic acid in 2 steps involving the cytochrome P450 monooxygenase aba2 and the short-chain dehydrogenase/reductase aba4, via the intermediates 1'-deoxy-ABA or 1',4'-trans-diol-ABA, depending on the order of action of these 2 enzymes. Aba2 is responsible for the hydroxylation of carbon atom C-1' and aba4 might be involved in the oxidation of the C-4' carbon atom. This Botryotinia fuckeliana (strain B05.10) (Noble rot fungus) protein is Short-chain dehydrogenase/reductase aba4.